We begin with the raw amino-acid sequence, 693 residues long: Elongation factor G (693 aa).

A tr-type G domain is found at 8–282; sequence EKTRNIGIMA…AVIDYLPSPL (275 aa). Residues 17–24, 81–85, and 135–138 each bind GTP; these read AHIDAGKT, DTPGH, and NKMD.

The protein belongs to the TRAFAC class translation factor GTPase superfamily. Classic translation factor GTPase family. EF-G/EF-2 subfamily.

The protein resides in the cytoplasm. Catalyzes the GTP-dependent ribosomal translocation step during translation elongation. During this step, the ribosome changes from the pre-translocational (PRE) to the post-translocational (POST) state as the newly formed A-site-bound peptidyl-tRNA and P-site-bound deacylated tRNA move to the P and E sites, respectively. Catalyzes the coordinated movement of the two tRNA molecules, the mRNA and conformational changes in the ribosome. The protein is Elongation factor G of Staphylococcus aureus (strain Mu3 / ATCC 700698).